The chain runs to 289 residues: GTPase Era (289 aa).

Positions 2–167 (KSGFVSIIGR…LDEICKLLPE (166 aa)) constitute an Era-type G domain. A G1 region spans residues 10-17 (GRTNAGKS). 10-17 (GRTNAGKS) provides a ligand contact to GTP. A G2 region spans residues 36-40 (NATRR). The tract at residues 57 to 60 (DTPG) is G3. GTP contacts are provided by residues 57–61 (DTPGL) and 116–119 (TKVD). The interval 116–119 (TKVD) is G4. The segment at 146 to 148 (FST) is G5. The KH type-2 domain maps to 194 to 274 (IYENLSDEIP…FLKLDVVVKK (81 aa)).

The protein belongs to the TRAFAC class TrmE-Era-EngA-EngB-Septin-like GTPase superfamily. Era GTPase family. In terms of assembly, monomer.

The protein resides in the cytoplasm. It is found in the cell inner membrane. An essential GTPase that binds both GDP and GTP, with rapid nucleotide exchange. Plays a role in 16S rRNA processing and 30S ribosomal subunit biogenesis and possibly also in cell cycle regulation and energy metabolism. The protein is GTPase Era of Campylobacter concisus (strain 13826).